The primary structure comprises 156 residues: Transcriptional repressor NrdR (156 aa).

Residues 3–34 (CPYCGHLEDRVVDSRETQDGQATRRRRACLSC) fold into a zinc finger. The ATP-cone domain occupies 49-139 (PQVVKKDGRR…VYRAFRDVGE (91 aa)).

This sequence belongs to the NrdR family. The cofactor is Zn(2+).

Negatively regulates transcription of bacterial ribonucleotide reductase nrd genes and operons by binding to NrdR-boxes. This is Transcriptional repressor NrdR from Anaeromyxobacter dehalogenans (strain 2CP-C).